The following is a 349-amino-acid chain: Phenylalanine--tRNA ligase alpha subunit (349 aa).

E259 is a binding site for Mg(2+).

The protein belongs to the class-II aminoacyl-tRNA synthetase family. Phe-tRNA synthetase alpha subunit type 1 subfamily. Tetramer of two alpha and two beta subunits. Mg(2+) is required as a cofactor.

The protein localises to the cytoplasm. The enzyme catalyses tRNA(Phe) + L-phenylalanine + ATP = L-phenylalanyl-tRNA(Phe) + AMP + diphosphate + H(+). This chain is Phenylalanine--tRNA ligase alpha subunit, found in Lactobacillus gasseri (strain ATCC 33323 / DSM 20243 / BCRC 14619 / CIP 102991 / JCM 1131 / KCTC 3163 / NCIMB 11718 / NCTC 13722 / AM63).